Here is a 125-residue protein sequence, read N- to C-terminus: uncharacterized protein (125 aa).

Residues 36 to 57 form a disordered region; sequence EAKKAKEKQDSKTKDTDKKVDQ. A helical transmembrane segment spans residues 92–112; that stretch reads ITIFLLIVLVSAIMIGIYFGI.

The protein resides in the membrane. This is an uncharacterized protein from Mycoplasma pneumoniae (strain ATCC 29342 / M129 / Subtype 1) (Mycoplasmoides pneumoniae).